A 269-amino-acid chain; its full sequence is Protein CURLY FLAG LEAF 1 (269 aa).

The segment at 17–44 (SLNGGGGGGGGRRRGRRAAAAEGSDDSE) is disordered. The EAR signature appears at 47-52 (TVELNS). One can recognise a WW domain in the interval 54–88 (VALPYHWEQCLDIRTGQVYYINWEDGTRTTIDPRS). Disordered regions lie at residues 83–133 (TIDP…SGYT) and 174–218 (GDDE…SGAG). Composition is skewed to low complexity over residues 87–106 (RSSS…SSSR), 121–133 (AAAA…SGYT), and 180–202 (SSSS…AVSS). Over residues 203–212 (TLSSFSPTDE) the composition is skewed to polar residues.

As to quaternary structure, binds to HDG1.

Functionally, negatively regulates the cuticle development probably by interacting with the HD-ZIP IV transcription factor HDG1. This is Protein CURLY FLAG LEAF 1 from Oryza sativa subsp. indica (Rice).